The chain runs to 146 residues: MRNEMNLQFSALSQNESFARVTVAAFIAQLDPTMEELTEIKTVVSEAVTNAIIHGYEGNPEGIVYISVILEEAMVKLTIRDEGVGIFNLDEARQPLFTTKPELERSGMGFTIMENFMDEVEIISNESFGTTIHLTKYLSNSNALCN.

The protein belongs to the anti-sigma-factor family.

The catalysed reaction is L-seryl-[protein] + ATP = O-phospho-L-seryl-[protein] + ADP + H(+). It carries out the reaction L-threonyl-[protein] + ATP = O-phospho-L-threonyl-[protein] + ADP + H(+). In terms of biological role, binds to sigma F and blocks its ability to form an RNA polymerase holoenzyme (E-sigma F). Phosphorylates SpoIIAA on a serine residue. This phosphorylation may enable SpoIIAA to act as an anti-anti-sigma factor that counteracts SpoIIAB and thus releases sigma F from inhibition. In Bacillus cytotoxicus (strain DSM 22905 / CIP 110041 / 391-98 / NVH 391-98), this protein is Anti-sigma F factor.